The primary structure comprises 497 residues: Vacuolar-processing enzyme beta-isozyme 1 (497 aa).

Residues 1-23 (MAARCWVWGFVVALLAVAAAADG) form the signal peptide. Asn153 is a glycosylation site (N-linked (GlcNAc...) asparagine). His180 is an active-site residue. Residue Cys222 is the Nucleophile of the active site. A disulfide bridge links Cys255 with Cys269. An N-linked (GlcNAc...) asparagine glycan is attached at Asn340. Cystine bridges form between Cys432–Cys462 and Cys444–Cys479.

Belongs to the peptidase C13 family. Auto-catalytic activation.

It is found in the protein storage vacuole. It catalyses the reaction Hydrolysis of proteins and small molecule substrates at -Asn-|-Xaa- bonds.. Functionally, asparagine-specific endopeptidase that may be involved in processing of proteins targeted to vacuoles. Cysteine protease required for post-translational proteolysis of seed storage proteins in the protein storage vacuole (PSV) of developing seeds, by processing of proglutelin precursor to mature glutelin subunits, thus contributing to the formation of protein crystalline structures in PSV. In Oryza sativa subsp. indica (Rice), this protein is Vacuolar-processing enzyme beta-isozyme 1.